Reading from the N-terminus, the 242-residue chain is Cytochrome c oxidase subunit 2 (242 aa).

Over 1-30 (MSFYGSRYFGDIVHGELGKDLFRYHGFVMM) the chain is Mitochondrial intermembrane. A helical transmembrane segment spans residues 31 to 47 (VAVAVLVFVMYMGCVIL). Topologically, residues 48–66 (FTKFSYRHFLNRQRLEFWW) are mitochondrial matrix. A helical membrane pass occupies residues 67–83 (TIVPMLMLVGLWXPSMI). Topologically, residues 84–242 (NLYYMEEVKR…YFVMWLEALN (159 aa)) are mitochondrial intermembrane. Residues His-176, Cys-211, Glu-213, Cys-215, His-219, and Met-222 each coordinate Cu cation. Mg(2+) is bound at residue Glu-213.

The protein belongs to the cytochrome c oxidase subunit 2 family. As to quaternary structure, component of the cytochrome c oxidase (complex IV, CIV), a multisubunit enzyme composed of a catalytic core of 3 subunits and several supernumerary subunits. The complex exists as a monomer or a dimer and forms supercomplexes (SCs) in the inner mitochondrial membrane with ubiquinol-cytochrome c oxidoreductase (cytochrome b-c1 complex, complex III, CIII). It depends on Cu cation as a cofactor.

Its subcellular location is the mitochondrion inner membrane. It carries out the reaction 4 Fe(II)-[cytochrome c] + O2 + 8 H(+)(in) = 4 Fe(III)-[cytochrome c] + 2 H2O + 4 H(+)(out). Functionally, component of the cytochrome c oxidase, the last enzyme in the mitochondrial electron transport chain which drives oxidative phosphorylation. The respiratory chain contains 3 multisubunit complexes succinate dehydrogenase (complex II, CII), ubiquinol-cytochrome c oxidoreductase (cytochrome b-c1 complex, complex III, CIII) and cytochrome c oxidase (complex IV, CIV), that cooperate to transfer electrons derived from NADH and succinate to molecular oxygen, creating an electrochemical gradient over the inner membrane that drives transmembrane transport and the ATP synthase. Cytochrome c oxidase is the component of the respiratory chain that catalyzes the reduction of oxygen to water. Electrons originating from reduced cytochrome c in the intermembrane space (IMS) are transferred via the dinuclear copper A center (CU(A)) of subunit 2 and heme A of subunit 1 to the active site in subunit 1, a binuclear center (BNC) formed by heme A3 and copper B (CU(B)). The BNC reduces molecular oxygen to 2 water molecules using 4 electrons from cytochrome c in the IMS and 4 protons from the mitochondrial matrix. This chain is Cytochrome c oxidase subunit 2 (COII), found in Mytilus edulis (Blue mussel).